The primary structure comprises 685 residues: DEAD-box ATP-dependent RNA helicase 7 (685 aa).

A disordered region spans residues 1-89 (MPSISMMSDA…SELVQADDLK (89 aa)). Basic and acidic residues-rich tracts occupy residues 22–42 (MKSETLDSDDTVVKKEKSSSK) and 66–78 (AVDLDDSSDKSDN). A Q motif motif is present at residues 107 to 135 (NSLSNFRISKPLKDVLISKGIKALFPIQA). A Helicase ATP-binding domain is found at 138 to 320 (FDNVIDGCDL…TRFLKSAKKT (183 aa)). ATP is bound at residue 151–158 (ARTGQGKT). Residues 266–269 (DEAD) carry the DEAD box motif. Residues 349-491 (DLIPDIIRCY…LSAPQPVDVA (143 aa)) enclose the Helicase C-terminal domain.

It belongs to the DEAD box helicase family. DDX21/DDX50 subfamily.

It is found in the nucleus. The enzyme catalyses ATP + H2O = ADP + phosphate + H(+). The chain is DEAD-box ATP-dependent RNA helicase 7 (RH7) from Spinacia oleracea (Spinach).